The chain runs to 513 residues: MEMAKEQELILVLDFGSQYNQLITRRIREMGVYSELHDHEISIEEIKKMNPKGIILSGGPNSVYEEGSFTIDPEIYNLGIPVLGICYGMQLTTKLLGGKVERANEREYGKAIINAKSDELFAGLPAEQTVWMSHSDKVIEIPEGFEVIADSPSTDYAAIEDKKRRIYGVQFHPEVRHTEYGNDLLNNFVRRVCECKGQWTMENFIEIEIEKIRQRVGDRRVLCAMSGGVDSSVVAVLLHKAIGDQLTCIFVDHGLLRKGEGDMVMEQFGEGFNMNIIRVNAKDRFMNKLKGVSDPEQKRKIIGNEFVYVFDDEASKLKGVDFLAQGTLYTDVIESGTKTAQTIKSHHNVGGLPEDMEFELIEPINTLFKDEVRKLGIELGIPEHLVWRQPFPGPGLGIRVLGEITEDKLEIVRESDAILRQVIREEGLEREIWQYFTVLPNIQSVGVMGDYRTYDHTVGIRAVTSIDGMTSDFARIDWEVLQKISSRIVNEVDHVNRVVYDITSKPPSTIEWE.

The 190-residue stretch at 9 to 198 (LILVLDFGSQ…VRRVCECKGQ (190 aa)) folds into the Glutamine amidotransferase type-1 domain. C86 (nucleophile) is an active-site residue. Residues H172 and E174 contribute to the active site. The 190-residue stretch at 199–388 (WTMENFIEIE…LGIPEHLVWR (190 aa)) folds into the GMPS ATP-PPase domain. 226 to 232 (SGGVDSS) lines the ATP pocket.

Homodimer.

The enzyme catalyses XMP + L-glutamine + ATP + H2O = GMP + L-glutamate + AMP + diphosphate + 2 H(+). It functions in the pathway purine metabolism; GMP biosynthesis; GMP from XMP (L-Gln route): step 1/1. Functionally, catalyzes the synthesis of GMP from XMP. The polypeptide is GMP synthase [glutamine-hydrolyzing] (Staphylococcus aureus (strain MSSA476)).